Reading from the N-terminus, the 435-residue chain is Elongation factor 1-alpha (435 aa).

One can recognise a tr-type G domain in the interval K6–V231. A G1 region spans residues G15–S22. G15–S22 serves as a coordination point for GTP. Positions G71–D75 are G2. Positions D92 to G95 are G3. GTP is bound by residues D92–H96 and N154–D157. Residues N154–D157 are G4. Residues S195–F197 are G5.

This sequence belongs to the TRAFAC class translation factor GTPase superfamily. Classic translation factor GTPase family. EF-Tu/EF-1A subfamily.

The protein resides in the cytoplasm. Its function is as follows. This protein promotes the GTP-dependent binding of aminoacyl-tRNA to the A-site of ribosomes during protein biosynthesis. The protein is Elongation factor 1-alpha of Tetrahymena pyriformis.